The chain runs to 2798 residues: Nipped-B-like protein (2798 aa).

Composition is skewed to polar residues over residues 128–173 (LSQN…QNSP) and 191–208 (HPSS…SVSS). The disordered stretch occupies residues 128–338 (LSQNSMHSSP…IKLGKDEKDQ (211 aa)). Phosphoserine is present on residues Ser150 and Ser162. A compositionally biased stretch (basic and acidic residues) spans 234–249 (HHADNPRHGSSDDYLH). Residues Ser243, Ser256, Ser274, Ser280, Ser284, Ser301, Ser306, Ser318, and Ser350 each carry the phosphoserine modification. Basic and acidic residues predominate over residues 482-500 (RESAIERERFSKEVQDKDK). The disordered stretch occupies residues 482-940 (RESAIERERF…NKAEFPSYLL (459 aa)). Positions 523 to 534 (PASQETGSTGNG) are enriched in polar residues. Basic and acidic residues-rich tracts occupy residues 562-572 (DSIKKPEETKQ), 593-625 (PENH…ESKP), 634-663 (KSNE…ESKQ), 672-685 (KQNE…KPND), and 694-899 (ENTK…DTNK). Thr713 and Thr746 each carry phosphothreonine. Ser906 bears the Phosphoserine mark. Positions 908 to 933 (NSKDDKRTEGNRSKVDSNKAHTDNKA) are enriched in basic and acidic residues. The PxVxL motif signature appears at 990–1003 (NKGAKPVVVLQKLS). Disordered stretches follow at residues 1011 to 1041 (IKDR…DQSV) and 1054 to 1186 (ESTM…TPEE). The residue at position 1076 (Lys1076) is an N6-acetyllysine. A phosphoserine mark is found at Ser1083, Ser1084, and Ser1090. Positions 1083 to 1094 (SSDEDNDSDEAF) are enriched in acidic residues. Residues 1103–1133 (KDDDKAWEYEERDRRSSGDHRRSGHSHDGRR) are compositionally biased toward basic and acidic residues. Residues Ser1144, Ser1146, and Ser1148 each carry the phosphoserine modification. Residue Tyr1153 is modified to Phosphotyrosine. Ser1154 carries the phosphoserine modification. Over residues 1165–1176 (KMKKKEKQKKRK) the composition is skewed to basic residues. Thr1183 carries the phosphothreonine modification. Ser1191 bears the Phosphoserine mark. Residues 1685-1705 (AMKSQKDEESSDATHHAKELE) show a composition bias toward basic and acidic residues. The segment at 1685–1706 (AMKSQKDEESSDATHHAKELET) is disordered. HEAT repeat units lie at residues 1761-1799 (AQSF…VDPS), 1837-1875 (PQLA…EQPT), 1939-1978 (YDWF…HILK), 2221-2261 (VNLK…LKEM), and 2307-2345 (LIHP…KYAG). Basic and acidic residues predominate over residues 2467 to 2483 (VKDKRKERKTSPAKENE). Disordered regions lie at residues 2467–2514 (VKDK…DDIN) and 2645–2690 (TSLL…DSTE). A phosphoserine mark is found at Ser2487, Ser2503, Ser2505, Ser2507, Ser2509, Ser2646, and Ser2652. Residues 2504 to 2513 (ESDSDSEDDI) are compositionally biased toward acidic residues. Position 2661 is a phosphothreonine (Thr2661). Ser2666 bears the Phosphoserine mark.

Belongs to the SCC2/Nipped-B family. As to quaternary structure, heterodimerizes with MAU2/SCC4 to form the cohesin loading complex. The NIPBL-MAU2 heterodimer interacts with the cohesin complex composed of SMC1A/B and SMC3 heterodimer, RAD21 and STAG1/SA1. NIPBL directly contacts all members of the complex, RAD21, SMC1A/B, SMC3 and STAG1. Interacts directly (via PxVxL motif) with CBX3 and CBX5. Interacts with ZNF609 (via N-terminus). Interacts with the multiprotein complex Integrator. Interacts with BRD4. Spermatocytes and oocytes (at protein level).

The protein localises to the nucleus. It localises to the chromosome. In terms of biological role, plays an important role in the loading of the cohesin complex on to DNA. Forms a heterodimeric complex (also known as cohesin loading complex) with MAU2/SCC4 which mediates the loading of the cohesin complex onto chromatin. Plays a role in cohesin loading at sites of DNA damage. Its recruitment to double-strand breaks (DSBs) sites occurs in a CBX3-, RNF8- and RNF168-dependent manner whereas its recruitment to UV irradiation-induced DNA damage sites occurs in a ATM-, ATR-, RNF8- and RNF168-dependent manner. Along with ZNF609, promotes cortical neuron migration during brain development by regulating the transcription of crucial genes in this process. Preferentially binds promoters containing paused RNA polymerase II. Up-regulates the expression of SEMA3A, NRP1, PLXND1 and GABBR2 genes, among others. The polypeptide is Nipped-B-like protein (Nipbl) (Mus musculus (Mouse)).